The sequence spans 117 residues: Large ribosomal subunit protein bL20 (117 aa).

This sequence belongs to the bacterial ribosomal protein bL20 family.

Binds directly to 23S ribosomal RNA and is necessary for the in vitro assembly process of the 50S ribosomal subunit. It is not involved in the protein synthesizing functions of that subunit. The sequence is that of Large ribosomal subunit protein bL20 from Roseiflexus castenholzii (strain DSM 13941 / HLO8).